The following is a 475-amino-acid chain: Ribulose bisphosphate carboxylase large chain (475 aa).

Residues 1-2 (MS) constitute a propeptide that is removed on maturation. Pro-3 carries the N-acetylproline modification. At Lys-14 the chain carries N6,N6,N6-trimethyllysine. Substrate is bound by residues Asn-123 and Thr-173. Lys-175 serves as the catalytic Proton acceptor. Position 177 (Lys-177) interacts with substrate. Residues Lys-201, Asp-203, and Glu-204 each coordinate Mg(2+). At Lys-201 the chain carries N6-carboxylysine. The active-site Proton acceptor is His-294. Arg-295, His-327, and Ser-379 together coordinate substrate.

This sequence belongs to the RuBisCO large chain family. Type I subfamily. As to quaternary structure, heterohexadecamer of 8 large chains and 8 small chains; disulfide-linked. The disulfide link is formed within the large subunit homodimers. Mg(2+) serves as cofactor. The disulfide bond which can form in the large chain dimeric partners within the hexadecamer appears to be associated with oxidative stress and protein turnover.

The protein resides in the plastid. It localises to the chloroplast. The enzyme catalyses 2 (2R)-3-phosphoglycerate + 2 H(+) = D-ribulose 1,5-bisphosphate + CO2 + H2O. It carries out the reaction D-ribulose 1,5-bisphosphate + O2 = 2-phosphoglycolate + (2R)-3-phosphoglycerate + 2 H(+). Functionally, ruBisCO catalyzes two reactions: the carboxylation of D-ribulose 1,5-bisphosphate, the primary event in carbon dioxide fixation, as well as the oxidative fragmentation of the pentose substrate in the photorespiration process. Both reactions occur simultaneously and in competition at the same active site. In Piper cenocladum (Ant piper), this protein is Ribulose bisphosphate carboxylase large chain.